Consider the following 601-residue polypeptide: RNA polymerase II C-terminal domain phosphatase-like 5 (601 aa).

Positions 1–20 (MFVAKNLSPERESKRQKKEP) are disordered. The segment covering 8–20 (SPERESKRQKKEP) has biased composition (basic and acidic residues). 2 consecutive FCP1 homology domains span residues 84-259 (LNMK…TDES) and 381-553 (LNEK…DESE).

In terms of tissue distribution, expressed in roots, seedlings, hypocotyls, cotyledons, leaves, siliques and flowers.

Its subcellular location is the nucleus. The enzyme catalyses O-phospho-L-seryl-[protein] + H2O = L-seryl-[protein] + phosphate. The catalysed reaction is O-phospho-L-threonyl-[protein] + H2O = L-threonyl-[protein] + phosphate. Its function is as follows. Mediates the dephosphorylation of 'Ser-2' of the heptad repeats YSPTSPS in the C-terminal domain of the largest RNA polymerase II subunit (RPB1). This promotes the activity of RNA polymerase II. Positively regulates abscisic acid (ABA) and drought responses, including the regulation of specific genes expression. The polypeptide is RNA polymerase II C-terminal domain phosphatase-like 5 (Arabidopsis thaliana (Mouse-ear cress)).